Reading from the N-terminus, the 130-residue chain is Small ribosomal subunit protein uS8 (130 aa).

Belongs to the universal ribosomal protein uS8 family. Part of the 30S ribosomal subunit. Contacts proteins S5 and S12.

In terms of biological role, one of the primary rRNA binding proteins, it binds directly to 16S rRNA central domain where it helps coordinate assembly of the platform of the 30S subunit. The polypeptide is Small ribosomal subunit protein uS8 (Ruegeria sp. (strain TM1040) (Silicibacter sp.)).